The following is a 399-amino-acid chain: Tyrosine--tRNA ligase (399 aa).

The 'HIGH' region signature appears at 44–53 (PTAPDLHLGH). A 'KMSKS' region motif is present at residues 229–233 (KMSKS). Lys232 contributes to the ATP binding site. The 61-residue stretch at 338-398 (ISITKALVDC…GKRKFAKLKV (61 aa)) folds into the S4 RNA-binding domain.

The protein belongs to the class-I aminoacyl-tRNA synthetase family. TyrS type 2 subfamily. In terms of assembly, homodimer.

It is found in the cytoplasm. The enzyme catalyses tRNA(Tyr) + L-tyrosine + ATP = L-tyrosyl-tRNA(Tyr) + AMP + diphosphate + H(+). Catalyzes the attachment of tyrosine to tRNA(Tyr) in a two-step reaction: tyrosine is first activated by ATP to form Tyr-AMP and then transferred to the acceptor end of tRNA(Tyr). This chain is Tyrosine--tRNA ligase, found in Sulfurimonas denitrificans (strain ATCC 33889 / DSM 1251) (Thiomicrospira denitrificans (strain ATCC 33889 / DSM 1251)).